Reading from the N-terminus, the 406-residue chain is Subtilisin-like protease CPC735_023170 (406 aa).

The first 20 residues, 1–20, serve as a signal peptide directing secretion; sequence MRLFQSTCVLVGTVLPLFTA. Positions 21–118 are excised as a propeptide; the sequence is FPISSPREIE…VEPDSMAYVT (98 aa). The Inhibitor I9 domain occupies 35–115; it reads KYIITFKKGI…VESVEPDSMA (81 aa). Residue N125 is glycosylated (N-linked (GlcNAc...) asparagine). Positions 127–406 constitute a Peptidase S8 domain; that stretch reads TYGPRRISHR…NKLAYNGSGK (280 aa). Catalysis depends on charge relay system residues D161 and H192. N-linked (GlcNAc...) asparagine glycosylation occurs at N239. The segment at 283-309 is disordered; sequence NDGRDAGRNSPGSAPESITVGSINSRR. An N-linked (GlcNAc...) asparagine glycan is attached at N346. Catalysis depends on S351, which acts as the Charge relay system. An N-linked (GlcNAc...) asparagine glycan is attached at N402.

Belongs to the peptidase S8 family.

The protein localises to the secreted. In terms of biological role, secreted subtilisin-like serine protease with keratinolytic activity that contributes to pathogenicity. The chain is Subtilisin-like protease CPC735_023170 from Coccidioides posadasii (strain C735) (Valley fever fungus).